The following is a 335-amino-acid chain: Pregnancy-specific beta-1-glycoprotein 11 (335 aa).

The signal sequence occupies residues 1-34; the sequence is MGPLSAPPCTEHIKWKGLLLTALLLNFWNLPTTA. Positions 35-144 constitute an Ig-like V-type domain; sequence QVMIEAQPPK…TGYFTFTLYL (110 aa). 3 N-linked (GlcNAc...) asparagine glycosylation sites follow: asparagine 61, asparagine 104, and asparagine 111. A Cell attachment site motif is present at residues 127 to 129; that stretch reads RGD. Ig-like C2-type domains are found at residues 147-234 and 242-317; these read PKPS…VTLN and PRIF…TSLT. Cystine bridges form between cysteine 169–cysteine 217 and cysteine 261–cysteine 301.

The protein belongs to the immunoglobulin superfamily. CEA family.

The protein resides in the secreted. The chain is Pregnancy-specific beta-1-glycoprotein 11 (PSG11) from Homo sapiens (Human).